The primary structure comprises 744 residues: Prestin (744 aa).

The Cytoplasmic portion of the chain corresponds to 1–75 (MDHAEENEIL…PITKWLPAYK (75 aa)). A helical membrane pass occupies residues 76–105 (FKEYVLGDLVSGISTGVLQLPQGLAFAMLA). Residues 106–108 (AVP) are Extracellular-facing. A helical transmembrane segment spans residues 109–126 (PIFGLYSSFYPVIMYCFL). Residues 127 to 137 (GTSRHISIGPF) lie on the Cytoplasmic side of the membrane. A helical membrane pass occupies residues 138 to 151 (AVISLMIGGVAVRL). The Extracellular portion of the chain corresponds to 152 to 168 (VPDDIVIPGGVNATNGT). Residues 158–168 (IPGGVNATNGT) carry the Involved in motor function motif. Residues Asn163 and Asn166 are each glycosylated (N-linked (GlcNAc...) asparagine). Residues 169–196 (EARDALRVKVAMSVTLLSGIIQFCLGVC) form a helical membrane-spanning segment. Over 197-206 (RFGFVAIYLT) the chain is Cytoplasmic. A helical membrane pass occupies residues 207-230 (EPLVRGFTTAAAVHVFTSMLKYLF). Residues 231 to 241 (GVKTKRYSGIF) are Extracellular-facing. The segment at residues 242-253 (SVVYSTVAVLQN) is an intramembrane region (helical). At 254–258 (VKNLN) the chain is on the extracellular side. The chain crosses the membrane as a helical span at residues 259-282 (VCSLGVGLMVFGLLLGGKEFNERF). The Cytoplasmic portion of the chain corresponds to 283–291 (KEKLPAPIP). Residues 292–307 (LEFFAVVMGTGISAGF) form a helical membrane-spanning segment. Residues 308-332 (NLKESYNVDVVGTLPLGLLPPANPD) lie on the Extracellular side of the membrane. A helical transmembrane segment spans residues 333–367 (TSLFHLVYVDAIAIAIVGFSVTISMAKTLANKHGY). Topologically, residues 368–370 (QVD) are cytoplasmic. A helical transmembrane segment spans residues 371–388 (GNQELIALGLCNSIGSLF). At 389-396 (QTFSISCS) the chain is on the extracellular side. A helical transmembrane segment spans residues 397-406 (LSRSLVQEGT). Residue Ser398 coordinates salicylate. Residues 407–410 (GGKT) lie on the Cytoplasmic side of the membrane. A helical transmembrane segment spans residues 411-432 (QLAGCLASLMILLVILATGFLF). Residues 433 to 436 (ESLP) lie on the Extracellular side of the membrane. Residues 437–464 (QAVLSAIVIVNLKGMFMQFSDLPFFWRT) form a helical membrane-spanning segment. Residue Ser465 is a topological domain, cytoplasmic. A helical membrane pass occupies residues 466 to 481 (KIELTIWLTTFVSSLF). The Extracellular portion of the chain corresponds to 482–483 (LG). The helical transmembrane segment at 484-504 (LDYGLITAVIIALLTVIYRTQ) threads the bilayer. The extended region for STAS domain stretch occupies residues 505–718 (SPSYKVLGKL…AVLGSQLREA (214 aa)). At 505–744 (SPSYKVLGKL…PNATPATPEA (240 aa)) the chain is on the cytoplasmic side. The STAS domain maps to 525–713 (AYEEVKEIPG…HSIHDAVLGS (189 aa)). Positions 718 to 744 (ALAEQEASAPPSQEDLEPNATPATPEA) are disordered.

Belongs to the SLC26A/SulP transporter (TC 2.A.53) family. As to quaternary structure, homodimer. Interacts (via STAS domain) with CALM; this interaction is calcium-dependent and the STAS domain interacts with only one lobe of CALM which is an elongated conformation. Interacts with MYH1.

The protein resides in the lateral cell membrane. The enzyme catalyses 2 hydrogencarbonate(in) + chloride(out) = 2 hydrogencarbonate(out) + chloride(in). Functionally, voltage-sensitive motor protein that drives outer hair cell (OHC) electromotility (eM) and participates in sound amplification in the hearing organ. Converts changes in the transmembrane electric potential into mechanical displacements resulting in the coupling of its expansion to movement of a charged voltage sensor across the lipid membrane. The nature of the voltage sensor is not completely clear, and two models compete. In the first model, acts as an incomplete transporter where intracellular chloride anion acts as extrinsic voltage sensor that drives conformational change in the protein which is sufficient to produce a length change in the plane of the membrane and hence in the length of the OHC. The second model in which multiple charged amino acid residues are distributed at the intracellular and extracellular membrane interfaces that form an intrinsic voltage sensor, whose movement produces the non-linear capacitance (NLC). However, the effective voltage sensor may be the result of a hybrid voltage sensor, assembled from intrinsic charge (charged residues) and extrinsic charge (bound anion). Notably, binding of anions to the anion-binding pocket partially neutralizes the intrinsic positive charge rather than to form an electrically negative sensor, therefore remaining charge may serve as voltage sensor that, after depolarization, moves from down (expanded state) to up (contracted) conformation, which is accompanied by an eccentric contraction of the intermembrane cross-sectional area of the protein as well as a major increase in the hydrophobic thickness of the protein having as consequences the plasma membrane thickening and the cell contraction after membrane depolarization. The anion-binding pocket transits from the inward-open (Down) state, where it is exposed toward the intracellular solvent in the absence of anion, to the occluded (Up) state upon anion binding. Salicylate competes for the anion-binding site and inhibits the voltage-sensor movement, and therefore inhibits the charge transfer and electromotility by displacing Cl(-) from the anion-binding site and by preventing the structural transitions to the contracted state. In addition, can act as a weak Cl(-)/HCO3(-) antiporter across the cell membrane and so regulate the intracellular pH of the outer hair cells (OHCs), while firstly found as being unable to mediate electrogenic anion transport. Moreover, supports a role in cardiac mechanical amplification serving as an elastic element to enhance the actomyosin- based sarcomere contraction system. The chain is Prestin from Homo sapiens (Human).